Here is a 153-residue protein sequence, read N- to C-terminus: MSEKYVVTWDMFQMHARKLSERLLPASQWKGIIAVSRGGLFPAAVLARELGIRHIETVCIASYHDHVEQGELKVLHRAEGDGEGFIVVDDLVDTGNTARAIRDMYPKAKFVTVFAKPAGAALVDDYVIDIPQNTWIEQPWDLGLTFVPPLARK.

5-phospho-alpha-D-ribose 1-diphosphate-binding positions include 37–38 (RG) and 89–97 (DDLVDTGNT). Mg(2+) is bound at residue Asp-90. 2 residues coordinate guanine: Asp-93 and Ile-136. Xanthine is bound by residues Asp-93 and Ile-136. Residues 93-97 (DTGNT) and 135-136 (WI) contribute to the GMP site.

Belongs to the purine/pyrimidine phosphoribosyltransferase family. XGPT subfamily. In terms of assembly, homotetramer. Mg(2+) serves as cofactor.

It localises to the cell inner membrane. The catalysed reaction is GMP + diphosphate = guanine + 5-phospho-alpha-D-ribose 1-diphosphate. The enzyme catalyses XMP + diphosphate = xanthine + 5-phospho-alpha-D-ribose 1-diphosphate. It catalyses the reaction IMP + diphosphate = hypoxanthine + 5-phospho-alpha-D-ribose 1-diphosphate. It functions in the pathway purine metabolism; GMP biosynthesis via salvage pathway; GMP from guanine: step 1/1. Its pathway is purine metabolism; XMP biosynthesis via salvage pathway; XMP from xanthine: step 1/1. In terms of biological role, purine salvage pathway enzyme that catalyzes the transfer of the ribosyl-5-phosphate group from 5-phospho-alpha-D-ribose 1-diphosphate (PRPP) to the N9 position of the 6-oxopurines guanine and xanthine to form the corresponding ribonucleotides GMP (guanosine 5'-monophosphate) and XMP (xanthosine 5'-monophosphate), with the release of PPi. To a lesser extent, also acts on hypoxanthine. This Pasteurella multocida (strain Pm70) protein is Xanthine-guanine phosphoribosyltransferase.